Here is a 625-residue protein sequence, read N- to C-terminus: Dual specificity protein phosphatase 8 (625 aa).

The Rhodanese domain occupies 23–138 (GPGGPLVIDS…FSSCFPGLCE (116 aa)). The Tyrosine-protein phosphatase domain maps to 160–302 (GLTRILPHLY…LLEYERSLKL (143 aa)). Residue Cys-246 is the Phosphocysteine intermediate of the active site. The disordered stretch occupies residues 306–586 (LQGDPGTPSG…PAPETQFKRR (281 aa)). Positions 380–389 (SSDRLQDTNR) are enriched in basic and acidic residues. Residues 431–448 (AALGLSSPSPDSPDAAPE) show a composition bias toward low complexity. The segment covering 555–570 (DLRRREAARAEPRDAR) has biased composition (basic and acidic residues).

The protein belongs to the protein-tyrosine phosphatase family. Non-receptor class dual specificity subfamily. As to quaternary structure, monomer. Abundant in brain, heart and skeletal muscle.

The protein localises to the cytoplasm. It localises to the nucleus. It carries out the reaction O-phospho-L-tyrosyl-[protein] + H2O = L-tyrosyl-[protein] + phosphate. It catalyses the reaction O-phospho-L-seryl-[protein] + H2O = L-seryl-[protein] + phosphate. The catalysed reaction is O-phospho-L-threonyl-[protein] + H2O = L-threonyl-[protein] + phosphate. Has phosphatase activity with synthetic phosphatase substrates and negatively regulates mitogen-activated protein kinase activity, presumably by catalysing their dephosphorylation. Expected to display protein phosphatase activity toward phosphotyrosine, phosphoserine and phosphothreonine residues. In Homo sapiens (Human), this protein is Dual specificity protein phosphatase 8 (DUSP8).